Reading from the N-terminus, the 470-residue chain is Light-independent protochlorophyllide reductase subunit N (470 aa).

[4Fe-4S] cluster contacts are provided by Cys-24, Cys-49, and Cys-109.

This sequence belongs to the BchN/ChlN family. As to quaternary structure, protochlorophyllide reductase is composed of three subunits; ChlL, ChlN and ChlB. Forms a heterotetramer of two ChlB and two ChlN subunits. [4Fe-4S] cluster is required as a cofactor.

The catalysed reaction is chlorophyllide a + oxidized 2[4Fe-4S]-[ferredoxin] + 2 ADP + 2 phosphate = protochlorophyllide a + reduced 2[4Fe-4S]-[ferredoxin] + 2 ATP + 2 H2O. It participates in porphyrin-containing compound metabolism; chlorophyll biosynthesis (light-independent). Component of the dark-operative protochlorophyllide reductase (DPOR) that uses Mg-ATP and reduced ferredoxin to reduce ring D of protochlorophyllide (Pchlide) to form chlorophyllide a (Chlide). This reaction is light-independent. The NB-protein (ChlN-ChlB) is the catalytic component of the complex. In Acaryochloris marina (strain MBIC 11017), this protein is Light-independent protochlorophyllide reductase subunit N.